Reading from the N-terminus, the 215-residue chain is Putative serine/threonine-protein kinase YrzF (215 aa).

In terms of domain architecture, Protein kinase spans serine 27–serine 215. ATP is bound by residues isoleucine 33–valine 41 and lysine 54. Aspartate 135 acts as the Proton acceptor in catalysis.

Belongs to the protein kinase superfamily. Ser/Thr protein kinase family.

The enzyme catalyses L-seryl-[protein] + ATP = O-phospho-L-seryl-[protein] + ADP + H(+). The catalysed reaction is L-threonyl-[protein] + ATP = O-phospho-L-threonyl-[protein] + ADP + H(+). This Bacillus subtilis (strain 168) protein is Putative serine/threonine-protein kinase YrzF (yrzF).